A 328-amino-acid polypeptide reads, in one-letter code: Arabinose 5-phosphate isomerase KdsD (328 aa).

An SIS domain is found at 42 to 184 (CEKMFWCKGK…AVALLKARGF (143 aa)). Substrate contacts are provided by residues 75–76 (GT), His82, His88, 114–123 (ALIPVLKRLH), 148–150 (KVA), Thr222, and Asp275. His82 contributes to the Zn(2+) binding site. In terms of domain architecture, CBS 1 spans 210–268 (MHTGDEIPHVKKTASLRDALLEVTRKNLGMTVICDDNMMIEGIFTDGDLRRVFDMGVDV). Positions 277 to 328 (MTPGGIRVRPGILAVEALNLMQSRHITSVMVADGDHLLGVLHMHDLLRAGVV) constitute a CBS 2 domain.

This sequence belongs to the SIS family. GutQ/KpsF subfamily. As to quaternary structure, homotetramer.

It carries out the reaction D-arabinose 5-phosphate = D-ribulose 5-phosphate. It functions in the pathway carbohydrate biosynthesis; 3-deoxy-D-manno-octulosonate biosynthesis; 3-deoxy-D-manno-octulosonate from D-ribulose 5-phosphate: step 1/3. Its pathway is bacterial outer membrane biogenesis; lipopolysaccharide biosynthesis. Its activity is regulated as follows. Completely inhibited by 10 uM of nickel, copper, cadmium and mercury ions. Inhibited by zinc with an IC(50) of 1-3 uM. Metal ion inhibition may be a mechanism to control activity in vivo. Functionally, involved in the biosynthesis of 3-deoxy-D-manno-octulosonate (KDO), a unique 8-carbon sugar component of lipopolysaccharides (LPSs). KdsD is not essential in the KDO biosynthesis and can be substituted by GutQ. Catalyzes the reversible aldol-ketol isomerization between D-ribulose 5-phosphate (Ru5P) and D-arabinose 5-phosphate (A5P). This is Arabinose 5-phosphate isomerase KdsD (kdsD) from Escherichia coli (strain K12).